We begin with the raw amino-acid sequence, 433 residues long: UDP-N-acetylglucosamine 1-carboxyvinyltransferase (433 aa).

Position 34–35 (Lys-34–Asn-35) interacts with phosphoenolpyruvate. A UDP-N-acetyl-alpha-D-glucosamine-binding site is contributed by Arg-104. The Proton donor role is filled by Cys-128. Cys-128 carries the post-translational modification 2-(S-cysteinyl)pyruvic acid O-phosphothioketal. Residues Asp-320 and Ile-342 each contribute to the UDP-N-acetyl-alpha-D-glucosamine site.

Belongs to the EPSP synthase family. MurA subfamily.

The protein resides in the cytoplasm. The catalysed reaction is phosphoenolpyruvate + UDP-N-acetyl-alpha-D-glucosamine = UDP-N-acetyl-3-O-(1-carboxyvinyl)-alpha-D-glucosamine + phosphate. It participates in cell wall biogenesis; peptidoglycan biosynthesis. Its function is as follows. Cell wall formation. Adds enolpyruvyl to UDP-N-acetylglucosamine. This Parasynechococcus marenigrum (strain WH8102) protein is UDP-N-acetylglucosamine 1-carboxyvinyltransferase.